The primary structure comprises 309 residues: 4-hydroxy-3-methylbut-2-enyl diphosphate reductase (309 aa).

Residue Cys12 participates in [4Fe-4S] cluster binding. (2E)-4-hydroxy-3-methylbut-2-enyl diphosphate contacts are provided by His41 and His74. Dimethylallyl diphosphate contacts are provided by His41 and His74. His41 and His74 together coordinate isopentenyl diphosphate. Cys96 lines the [4Fe-4S] cluster pocket. His124 contributes to the (2E)-4-hydroxy-3-methylbut-2-enyl diphosphate binding site. His124 lines the dimethylallyl diphosphate pocket. An isopentenyl diphosphate-binding site is contributed by His124. The active-site Proton donor is the Glu126. Thr167 contacts (2E)-4-hydroxy-3-methylbut-2-enyl diphosphate. Cys197 contacts [4Fe-4S] cluster. 4 residues coordinate (2E)-4-hydroxy-3-methylbut-2-enyl diphosphate: Ser225, Ser226, Asn227, and Ser269. Positions 225, 226, 227, and 269 each coordinate dimethylallyl diphosphate. Isopentenyl diphosphate contacts are provided by Ser225, Ser226, Asn227, and Ser269.

The protein belongs to the IspH family. [4Fe-4S] cluster serves as cofactor.

The catalysed reaction is isopentenyl diphosphate + 2 oxidized [2Fe-2S]-[ferredoxin] + H2O = (2E)-4-hydroxy-3-methylbut-2-enyl diphosphate + 2 reduced [2Fe-2S]-[ferredoxin] + 2 H(+). It carries out the reaction dimethylallyl diphosphate + 2 oxidized [2Fe-2S]-[ferredoxin] + H2O = (2E)-4-hydroxy-3-methylbut-2-enyl diphosphate + 2 reduced [2Fe-2S]-[ferredoxin] + 2 H(+). It participates in isoprenoid biosynthesis; dimethylallyl diphosphate biosynthesis; dimethylallyl diphosphate from (2E)-4-hydroxy-3-methylbutenyl diphosphate: step 1/1. Its pathway is isoprenoid biosynthesis; isopentenyl diphosphate biosynthesis via DXP pathway; isopentenyl diphosphate from 1-deoxy-D-xylulose 5-phosphate: step 6/6. Catalyzes the conversion of 1-hydroxy-2-methyl-2-(E)-butenyl 4-diphosphate (HMBPP) into a mixture of isopentenyl diphosphate (IPP) and dimethylallyl diphosphate (DMAPP). Acts in the terminal step of the DOXP/MEP pathway for isoprenoid precursor biosynthesis. This is 4-hydroxy-3-methylbut-2-enyl diphosphate reductase from Pseudoalteromonas translucida (strain TAC 125).